The sequence spans 232 residues: Probable transcriptional regulatory protein Bd1964 (232 aa).

This sequence belongs to the TACO1 family.

The protein localises to the cytoplasm. This is Probable transcriptional regulatory protein Bd1964 from Bdellovibrio bacteriovorus (strain ATCC 15356 / DSM 50701 / NCIMB 9529 / HD100).